We begin with the raw amino-acid sequence, 318 residues long: Methionyl-tRNA formyltransferase (318 aa).

Ser112–Pro115 serves as a coordination point for (6S)-5,6,7,8-tetrahydrofolate.

The protein belongs to the Fmt family.

The catalysed reaction is L-methionyl-tRNA(fMet) + (6R)-10-formyltetrahydrofolate = N-formyl-L-methionyl-tRNA(fMet) + (6S)-5,6,7,8-tetrahydrofolate + H(+). In terms of biological role, attaches a formyl group to the free amino group of methionyl-tRNA(fMet). The formyl group appears to play a dual role in the initiator identity of N-formylmethionyl-tRNA by promoting its recognition by IF2 and preventing the misappropriation of this tRNA by the elongation apparatus. This Haemophilus influenzae (strain ATCC 51907 / DSM 11121 / KW20 / Rd) protein is Methionyl-tRNA formyltransferase.